A 119-amino-acid chain; its full sequence is uncharacterized protein (119 aa).

A signal peptide spans M1–G18. The tract at residues P23–A100 is disordered. The span at G43–Q71 shows a compositional bias: polar residues. A glycan (N-linked (GlcNAc...) asparagine) is linked at N44.

It localises to the secreted. This is an uncharacterized protein from Homo sapiens (Human).